The sequence spans 127 residues: Fluoride-specific ion channel FluC (127 aa).

A run of 4 helical transmembrane segments spans residues 4-24, 35-55, 71-91, and 103-123; these read LLLAVFIGGGTGSVARWLLSM, LGTLAANLIGAFIIGMGFAWF, TGFCGGLTTFSTFSAEVVFLL, and VFVNLLGSFAMTALAFWLFSA. Residues Gly-75 and Thr-78 each contribute to the Na(+) site.

The protein belongs to the fluoride channel Fluc/FEX (TC 1.A.43) family.

It is found in the cell inner membrane. It carries out the reaction fluoride(in) = fluoride(out). With respect to regulation, na(+) is not transported, but it plays an essential structural role and its presence is essential for fluoride channel function. In terms of biological role, fluoride-specific ion channel. Important for reducing fluoride concentration in the cell, thus reducing its toxicity. The polypeptide is Fluoride-specific ion channel FluC (Shigella flexneri serotype 5b (strain 8401)).